The following is a 452-amino-acid chain: Exodeoxyribonuclease 7 large subunit (452 aa).

It belongs to the XseA family. In terms of assembly, heterooligomer composed of large and small subunits.

The protein resides in the cytoplasm. The enzyme catalyses Exonucleolytic cleavage in either 5'- to 3'- or 3'- to 5'-direction to yield nucleoside 5'-phosphates.. Functionally, bidirectionally degrades single-stranded DNA into large acid-insoluble oligonucleotides, which are then degraded further into small acid-soluble oligonucleotides. The chain is Exodeoxyribonuclease 7 large subunit from Bacillus thuringiensis (strain Al Hakam).